A 315-amino-acid polypeptide reads, in one-letter code: tRNA wybutosine-synthesizing protein 5 (315 aa).

The 166-residue stretch at 102–267 (DEKYYLRSLG…YDKTDTYGNK (166 aa)) folds into the JmjC domain. Tyr-106 contributes to the 2-oxoglutarate binding site. Fe cation is bound by residues His-160 and Asp-162. The 2-oxoglutarate site is built by Asn-166 and Lys-175. His-235 is a binding site for Fe cation.

This sequence belongs to the TYW5 family. Homodimer. It depends on Fe(2+) as a cofactor.

The enzyme catalyses 7-[(3S)-3-amino-3-carboxypropyl]wyosine(37) in tRNA(Phe) + 2-oxoglutarate + O2 = 7-(2-hydroxy-3-amino-3-carboxypropyl)wyosine(37) in tRNA(Phe) + succinate + CO2. It functions in the pathway tRNA modification; wybutosine-tRNA(Phe) biosynthesis. In terms of biological role, tRNA hydroxylase that acts as a component of the wybutosine biosynthesis pathway. Wybutosine is a hyper modified guanosine with a tricyclic base found at the 3'-position adjacent to the anticodon of eukaryotic phenylalanine tRNA. Catalyzes the hydroxylation of 7-(a-amino-a-carboxypropyl)wyosine (yW-72) into undermodified hydroxywybutosine (OHyW*). OHyW* being further transformed into hydroxywybutosine (OHyW) by LCMT2/TYW4. OHyW is a derivative of wybutosine found in higher eukaryotes. This chain is tRNA wybutosine-synthesizing protein 5 (TYW5), found in Homo sapiens (Human).